A 193-amino-acid polypeptide reads, in one-letter code: Interleukin-18 (193 aa).

Positions 1–36 (MAAEPVEDNCINFVAMKFIDNTLYFIAEDDENLESD) are excised as a propeptide.

It belongs to the IL-1 family. As to quaternary structure, forms a ternary complex with ligand-binding receptor subunit IL18R1 and signaling receptor subunit IL18RAP at the plasma membrane. Mature IL18 first binds to IL18R1 forming a low affinity binary complex, which then interacts with IL18RAP to form a high affinity ternary complex that signals inside the cell. Interacts with cargo receptor TMED10; the interaction mediates the translocation from the cytoplasm into the ERGIC (endoplasmic reticulum-Golgi intermediate compartment) and thereby secretion. The pro-IL-18 precursor is processed by CASP1, CASP4 or CASP5 to yield its mature, active form. The pro-IL-18 precursor features autoinhibitory interactions between the propeptide and the post-cleavage-site region, preventing recognition by the IL18R1 receptor. Processing by CASP1, CASP4 or CASP5 induces conformational changes to generate critical receptor-binding sites. The mature form is then secreted and released in the extracellular milieu by passing through the gasdermin-D (GSDMD) pore. In contrast, cleavage by CASP3 inactivates IL18. As to expression, expressed in ovarian carcinoma but undetectable in normal ovarian epithelial cells. Resistant to proteolytic activation by caspase-1 and -4.

The protein resides in the cytoplasm. It is found in the cytosol. The protein localises to the secreted. Pro-inflammatory cytokine primarily involved in epithelial barrier repair, polarized T-helper 1 (Th1) cell and natural killer (NK) cell immune responses. Upon binding to IL18R1 and IL18RAP, forms a signaling ternary complex which activates NF-kappa-B, triggering synthesis of inflammatory mediators. Synergizes with IL12/interleukin-12 to induce IFNG synthesis from T-helper 1 (Th1) cells and natural killer (NK) cells. Involved in transduction of inflammation downstream of pyroptosis: its mature form is specifically released in the extracellular milieu by passing through the gasdermin-D (GSDMD) pore. The chain is Interleukin-18 from Homo sapiens (Human).